The chain runs to 158 residues: Transcription elongation factor GreA (158 aa).

The stretch at alanine 45–isoleucine 73 forms a coiled coil.

This sequence belongs to the GreA/GreB family.

Functionally, necessary for efficient RNA polymerase transcription elongation past template-encoded arresting sites. The arresting sites in DNA have the property of trapping a certain fraction of elongating RNA polymerases that pass through, resulting in locked ternary complexes. Cleavage of the nascent transcript by cleavage factors such as GreA or GreB allows the resumption of elongation from the new 3'terminus. GreA releases sequences of 2 to 3 nucleotides. In Xanthomonas axonopodis pv. citri (strain 306), this protein is Transcription elongation factor GreA.